Reading from the N-terminus, the 563-residue chain is BOS complex subunit NCLN (563 aa).

The N-terminal stretch at M1 to A42 is a signal peptide. Topologically, residues A43–A522 are lumenal. Residues N241 and N428 are each glycosylated (N-linked (GlcNAc...) asparagine). The chain crosses the membrane as a helical span at residues V523 to V543. Residues Q544–Q563 lie on the Cytoplasmic side of the membrane.

It belongs to the nicastrin family. In terms of assembly, component of the back of Sec61 (BOS) complex, composed of NCLN/Nicalin, NOMO (NOMO1, NOMO2 or NOMO3) and TMEM147. The BOS complex is part of the multi-pass translocon (MPT) complex, composed of three subcomplexes, the GEL complex (composed of RAB5IF/OPTI and TMCO1), the BOS complex (composed of NCLN/Nicalin, NOMO and TMEM147) and the PAT complex (composed of WDR83OS/Asterix and CCDC47). The MPT complex associates with the SEC61 complex. Highly expressed in pancreas and skeletal muscle and, at lower levels, in heart.

It localises to the endoplasmic reticulum membrane. Functionally, component of the multi-pass translocon (MPT) complex that mediates insertion of multi-pass membrane proteins into the lipid bilayer of membranes. The MPT complex takes over after the SEC61 complex: following membrane insertion of the first few transmembrane segments of proteins by the SEC61 complex, the MPT complex occludes the lateral gate of the SEC61 complex to promote insertion of subsequent transmembrane regions. May antagonize Nodal signaling and subsequent organization of axial structures during mesodermal patterning, via its interaction with NOMO. This Homo sapiens (Human) protein is BOS complex subunit NCLN.